The chain runs to 517 residues: Tyrosine-protein kinase Fgr (517 aa).

A lipid anchor (N-myristoyl glycine) is attached at Gly2. 2 S-palmitoyl cysteine lipidation sites follow: Cys3 and Cys6. The segment covering 17–33 has biased composition (basic and acidic residues); sequence VGLEGDFRSQGAEERYY. The interval 17–46 is disordered; that stretch reads VGLEGDFRSQGAEERYYPDPTQGRSSSISP. Tyr32 bears the Phosphotyrosine mark. At Ser50 the chain carries Phosphoserine. Residues 65-126 form the SH3 domain; it reads TGVTIFVALY…PSNYVAPVDS (62 aa). One can recognise an SH2 domain in the interval 132 to 229; the sequence is WYFGKISRKD…GLCYLLTAPC (98 aa). Tyr196 carries the phosphotyrosine modification. At Ser206 the chain carries Phosphoserine. One can recognise a Protein kinase domain in the interval 251 to 504; the sequence is IALDRRLGTG…YLQSFLEDYF (254 aa). ATP is bound by residues 257–265 and Lys279; that span reads LGTGCFGDV. The active-site Proton acceptor is Asp370. At Tyr400 the chain carries Phosphotyrosine; by autocatalysis. Tyr511 bears the Phosphotyrosine; by SRC mark.

The protein belongs to the protein kinase superfamily. Tyr protein kinase family. SRC subfamily. As to quaternary structure, interacts with ITGB1, ITGB2, MS4A2/FCER1B and FCGR2. Interacts (via SH2 domain) with SYK (tyrosine phosphorylated). Interacts (via SH2 domain) with FLT3 (tyrosine phosphorylated). Interacts with PTK2/FAK1. Interacts (via SH2 domain) with HCLS1 (tyrosine phosphorylated by SYK). Interacts with SIRPA and PTPNS1. Interacts (not phosphorylated on tyrosine residues) with CBL; FGR tyrosine phosphorylation promotes dissociation. Interacts with CLNK. In terms of processing, ubiquitinated. Becomes ubiquitinated in response to ITGB2 signaling; this does not lead to degradation. Phosphorylated. Autophosphorylated on tyrosine residues. Becomes phosphorylated in response to FCGR2 engagement, cell adhesion and signaling by ITGB2. Prior phosphorylation at Tyr-511 by SRC inhibits ulterior autophosphorylation at Tyr-400. In terms of tissue distribution, detected in brain cortex (at protein level).

The protein resides in the cell membrane. It is found in the cell projection. It localises to the ruffle membrane. The protein localises to the cytoplasm. Its subcellular location is the cytosol. The protein resides in the cytoskeleton. It is found in the mitochondrion inner membrane. It localises to the mitochondrion intermembrane space. The catalysed reaction is L-tyrosyl-[protein] + ATP = O-phospho-L-tyrosyl-[protein] + ADP + H(+). With respect to regulation, activated by autophosphorylation. Prior phosphorylation at Tyr-511 by SRC inhibits ulterior autophosphorylation at Tyr-400. Activated by phorbol myristate acetate, phosphatidic acid and poly-Lys. Binding (via SH2 domain) of HCLS1 that is already phosphorylated by SYK strongly increases kinase activity. Functionally, non-receptor tyrosine-protein kinase that transmits signals from cell surface receptors devoid of kinase activity and contributes to the regulation of immune responses, including neutrophil, monocyte, macrophage and mast cell functions, cytoskeleton remodeling in response to extracellular stimuli, phagocytosis, cell adhesion and migration. Promotes mast cell degranulation, release of inflammatory cytokines and IgE-mediated anaphylaxis. Acts downstream of receptors that bind the Fc region of immunoglobulins, such as MS4A2/FCER1B, FCER1G and FCGR2. Acts downstream of ITGB1 and ITGB2, and regulates actin cytoskeleton reorganization, cell spreading and adhesion. Depending on the context, activates or inhibits cellular responses. Functions as a negative regulator of ITGB2 signaling, phagocytosis and SYK activity in monocytes. Required for normal ITGB1 and ITGB2 signaling, normal cell spreading and adhesion in neutrophils and macrophages. Functions as a positive regulator of cell migration and regulates cytoskeleton reorganization via RAC1 activation. Phosphorylates SYK (in vitro) and promotes SYK-dependent activation of AKT1 and MAP kinase signaling. Phosphorylates PLD2 in antigen-stimulated mast cells, leading to PLD2 activation and the production of the signaling molecules lysophosphatidic acid and diacylglycerol. Promotes activation of PIK3R1. Phosphorylates FASLG, and thereby regulates its ubiquitination and subsequent internalization. Phosphorylates ABL1. Promotes phosphorylation of CBL, CTTN, PIK3R1, PTK2/FAK1, PTK2B/PYK2 and VAV2. Phosphorylates HCLS1 that has already been phosphorylated by SYK, but not unphosphorylated HCLS1. Together with CLNK, it acts as a negative regulator of natural killer cell-activating receptors and inhibits interferon-gamma production. This chain is Tyrosine-protein kinase Fgr (Fgr), found in Rattus norvegicus (Rat).